The sequence spans 459 residues: Probable ECA polymerase (459 aa).

The next 11 membrane-spanning stretches (helical) occupy residues 3–23 (LTQF…ILTL), 37–57 (IFFS…TCLL), 65–85 (VVPV…YGIY), 119–139 (LASV…FLLF), 154–174 (GVAL…VYFL), 181–201 (WLFF…VVGG), 206–226 (IIIA…ITLW), 227–247 (MLVT…LKRY), 340–360 (LVVM…GLII), 377–397 (YKAA…IVLA), and 409–429 (VFFC…YWLF).

It belongs to the WzyE family. As to quaternary structure, probably part of a complex composed of WzxE, WzyE and WzzE.

The protein localises to the cell inner membrane. Its pathway is bacterial outer membrane biogenesis; enterobacterial common antigen biosynthesis. Its function is as follows. Probably involved in the polymerization of enterobacterial common antigen (ECA) trisaccharide repeat units. In Photorhabdus laumondii subsp. laumondii (strain DSM 15139 / CIP 105565 / TT01) (Photorhabdus luminescens subsp. laumondii), this protein is Probable ECA polymerase.